The following is a 219-amino-acid chain: Octanoyltransferase (219 aa).

The BPL/LPL catalytic domain occupies 32 to 207 (ADSGDEIWLL…HLVRQLGYAQ (176 aa)). Substrate is bound by residues 71–78 (RGGQVTYH), 138–140 (SLG), and 151–153 (GLA). C169 (acyl-thioester intermediate) is an active-site residue.

The protein belongs to the LipB family.

It is found in the cytoplasm. It carries out the reaction octanoyl-[ACP] + L-lysyl-[protein] = N(6)-octanoyl-L-lysyl-[protein] + holo-[ACP] + H(+). It participates in protein modification; protein lipoylation via endogenous pathway; protein N(6)-(lipoyl)lysine from octanoyl-[acyl-carrier-protein]: step 1/2. In terms of biological role, catalyzes the transfer of endogenously produced octanoic acid from octanoyl-acyl-carrier-protein onto the lipoyl domains of lipoate-dependent enzymes. Lipoyl-ACP can also act as a substrate although octanoyl-ACP is likely to be the physiological substrate. In Stutzerimonas stutzeri (strain A1501) (Pseudomonas stutzeri), this protein is Octanoyltransferase.